Consider the following 506-residue polypeptide: Galactose/methyl galactoside import ATP-binding protein MglA (506 aa).

2 consecutive ABC transporter domains span residues 14-249 (LTMT…VGRE) and 260-506 (TPKE…AKYL). 46-53 (GENGAGKS) contributes to the ATP binding site.

It belongs to the ABC transporter superfamily. Galactose/methyl galactoside importer (TC 3.A.1.2.3) family. The complex is composed of one ATP-binding protein (MglA), two transmembrane proteins (MglC) and a solute-binding protein (MglB).

The protein resides in the cell inner membrane. It carries out the reaction D-galactose(out) + ATP + H2O = D-galactose(in) + ADP + phosphate + H(+). It catalyses the reaction methyl beta-D-galactoside(out) + ATP + H2O = methyl beta-D-galactoside(in) + ADP + phosphate + H(+). Its function is as follows. Part of the ABC transporter complex MglABC involved in galactose/methyl galactoside import. Responsible for energy coupling to the transport system. The sequence is that of Galactose/methyl galactoside import ATP-binding protein MglA from Pasteurella multocida (strain Pm70).